The chain runs to 386 residues: MTRKQATIAVRSGLNDDEQYGCVVPPIHLSSTYNFTGFNEPRAHDYSRRGNPTRDVVQRALAELEGGAGAVLTNTGMSAIHLVTTVFLKPGDLLVAPHDCYGGSYRLFDSLAKRGCYRVLFVDQGDEQALRAALAEKPKLVLVESPSNPLLRVVDIAKICHLAREVGAVSVVDNTFLSPALQNPLALGADLVLHSCTKYLNGHSDVVAGVVIAKDPDVVTELAWWANNIGVTGGAFDSYLLLRGLRTLVPRMELAQRNAQAIVKYLQTQPLVKKLYHPSLPENQGHEIAARQQKGFGAMLSFELDGDEQTLRRFLGGLSLFTLAESLGGVESLISHAATMTHAGMAPEARAAAGISETLLRISTGIEDGEDLIADLENGFRAANKG.

K198 carries the N6-(pyridoxal phosphate)lysine modification.

The protein belongs to the trans-sulfuration enzymes family. In terms of assembly, homotetramer. It depends on pyridoxal 5'-phosphate as a cofactor.

It localises to the cytoplasm. The enzyme catalyses O-succinyl-L-homoserine + L-cysteine = L,L-cystathionine + succinate + H(+). It functions in the pathway amino-acid biosynthesis; L-methionine biosynthesis via de novo pathway; L-cystathionine from O-succinyl-L-homoserine: step 1/1. Functionally, catalyzes the formation of L-cystathionine from O-succinyl-L-homoserine (OSHS) and L-cysteine, via a gamma-replacement reaction. In the absence of thiol, catalyzes gamma-elimination to form 2-oxobutanoate, succinate and ammonia. The sequence is that of Cystathionine gamma-synthase (metB) from Escherichia coli (strain K12).